The chain runs to 514 residues: Pantetheinase (514 aa).

A signal peptide spans 1–22; that stretch reads MITSRLLVYVAVLVLCVIKVSS. N-linked (GlcNAc...) asparagine glycosylation is present at Asn-39. The region spanning 40–307 is the CN hydrolase domain; that stretch reads ATLVPVSHEE…GKLLLSQLDS (268 aa). Glu-80 (proton acceptor) is an active-site residue. Residues Asn-87 and Asn-147 are each glycosylated (N-linked (GlcNAc...) asparagine). The active-site Proton donor is the Lys-179. Cys-212 (nucleophile) is an active-site residue. 2 N-linked (GlcNAc...) asparagine glycosylation sites follow: Asn-316 and Asn-354. Asp-492 carries the GPI-anchor amidated aspartate lipid modification. Positions 493–514 are cleaved as a propeptide — removed in mature form; that stretch reads PRSQVPGVMLLVIIPIVCSLSW.

It belongs to the carbon-nitrogen hydrolase superfamily. BTD/VNN family. As to quaternary structure, monomer.

Its subcellular location is the cell membrane. It catalyses the reaction (R)-pantetheine + H2O = cysteamine + (R)-pantothenate. In terms of biological role, amidohydrolase that hydrolyzes specifically one of the carboamide linkages in D-pantetheine thus recycling pantothenic acid (vitamin B5) and releasing cysteamine. This chain is Pantetheinase (VNN1), found in Canis lupus familiaris (Dog).